A 684-amino-acid polypeptide reads, in one-letter code: Suppressor of presenilin protein 3 (684 aa).

5 C2H2-type zinc fingers span residues 21–43 (YKCH…LRRH), 48–71 (FDCE…LQSH), 123–145 (YKCP…ILSH), 261–283 (YLCR…FRHH), and 291–313 (WTCI…VKMH). Disordered regions lie at residues 337–359 (DLNK…HSDM), 419–440 (KNNS…SKSD), and 469–501 (TSKF…DQFQ). C2H2-type zinc fingers lie at residues 590–612 (RECT…RDKH) and 618–641 (HTCP…FVDH). The disordered stretch occupies residues 652 to 684 (LPSSDSEDDNIPVPPDTPQRKKKAPKRGKRRGW). Residues 671–684 (RKKKAPKRGKRRGW) are compositionally biased toward basic residues.

The protein localises to the nucleus. Functionally, probable transcriptional regulator, which participates in the transcriptional repression of the presenilin protein hop-1. The sequence is that of Suppressor of presenilin protein 3 (spr-3) from Caenorhabditis elegans.